Reading from the N-terminus, the 217-residue chain is Probable transaldolase (217 aa).

Lysine 83 serves as the catalytic Schiff-base intermediate with substrate.

This sequence belongs to the transaldolase family. Type 3B subfamily.

The protein resides in the cytoplasm. It carries out the reaction D-sedoheptulose 7-phosphate + D-glyceraldehyde 3-phosphate = D-erythrose 4-phosphate + beta-D-fructose 6-phosphate. Its pathway is carbohydrate degradation; pentose phosphate pathway; D-glyceraldehyde 3-phosphate and beta-D-fructose 6-phosphate from D-ribose 5-phosphate and D-xylulose 5-phosphate (non-oxidative stage): step 2/3. Its function is as follows. Transaldolase is important for the balance of metabolites in the pentose-phosphate pathway. This Clostridium botulinum (strain Loch Maree / Type A3) protein is Probable transaldolase.